Reading from the N-terminus, the 137-residue chain is Protein cornichon homolog 3 (137 aa).

A run of 3 helical transmembrane segments spans residues 8–28, 54–74, and 113–133; these read IISF…LISL, ILQG…MALL, and LAYI…STLD.

The protein belongs to the cornichon family.

It localises to the membrane. This is Protein cornichon homolog 3 from Arabidopsis thaliana (Mouse-ear cress).